The chain runs to 107 residues: Pyrimidine/purine nucleoside phosphorylase (107 aa).

The protein belongs to the nucleoside phosphorylase PpnP family.

The enzyme catalyses a purine D-ribonucleoside + phosphate = a purine nucleobase + alpha-D-ribose 1-phosphate. It catalyses the reaction adenosine + phosphate = alpha-D-ribose 1-phosphate + adenine. The catalysed reaction is cytidine + phosphate = cytosine + alpha-D-ribose 1-phosphate. It carries out the reaction guanosine + phosphate = alpha-D-ribose 1-phosphate + guanine. The enzyme catalyses inosine + phosphate = alpha-D-ribose 1-phosphate + hypoxanthine. It catalyses the reaction thymidine + phosphate = 2-deoxy-alpha-D-ribose 1-phosphate + thymine. The catalysed reaction is uridine + phosphate = alpha-D-ribose 1-phosphate + uracil. It carries out the reaction xanthosine + phosphate = alpha-D-ribose 1-phosphate + xanthine. Its function is as follows. Catalyzes the phosphorolysis of diverse nucleosides, yielding D-ribose 1-phosphate and the respective free bases. Can use uridine, adenosine, guanosine, cytidine, thymidine, inosine and xanthosine as substrates. Also catalyzes the reverse reactions. The chain is Pyrimidine/purine nucleoside phosphorylase from Aromatoleum aromaticum (strain DSM 19018 / LMG 30748 / EbN1) (Azoarcus sp. (strain EbN1)).